The sequence spans 153 residues: SsrA-binding protein (153 aa).

This sequence belongs to the SmpB family.

The protein localises to the cytoplasm. Its function is as follows. Required for rescue of stalled ribosomes mediated by trans-translation. Binds to transfer-messenger RNA (tmRNA), required for stable association of tmRNA with ribosomes. tmRNA and SmpB together mimic tRNA shape, replacing the anticodon stem-loop with SmpB. tmRNA is encoded by the ssrA gene; the 2 termini fold to resemble tRNA(Ala) and it encodes a 'tag peptide', a short internal open reading frame. During trans-translation Ala-aminoacylated tmRNA acts like a tRNA, entering the A-site of stalled ribosomes, displacing the stalled mRNA. The ribosome then switches to translate the ORF on the tmRNA; the nascent peptide is terminated with the 'tag peptide' encoded by the tmRNA and targeted for degradation. The ribosome is freed to recommence translation, which seems to be the essential function of trans-translation. In Pelotomaculum thermopropionicum (strain DSM 13744 / JCM 10971 / SI), this protein is SsrA-binding protein.